The primary structure comprises 201 residues: Anthranilate synthase component 2 (201 aa).

The 194-residue stretch at 3-196 (NILFIDNFDS…IDWALSSTPA (194 aa)) folds into the Glutamine amidotransferase type-1 domain. Position 57–59 (57–59 (GPG)) interacts with L-glutamine. The Nucleophile; for GATase activity role is filled by cysteine 84. L-glutamine is bound by residues glutamine 88 and 134 to 135 (SL). Residues histidine 170 and glutamate 172 each act as for GATase activity in the active site.

In terms of assembly, heterotetramer consisting of two non-identical subunits: a beta subunit (TrpG) and a large alpha subunit (TrpE).

The enzyme catalyses chorismate + L-glutamine = anthranilate + pyruvate + L-glutamate + H(+). It functions in the pathway amino-acid biosynthesis; L-tryptophan biosynthesis; L-tryptophan from chorismate: step 1/5. Part of a heterotetrameric complex that catalyzes the two-step biosynthesis of anthranilate, an intermediate in the biosynthesis of L-tryptophan. In the first step, the glutamine-binding beta subunit (TrpG) of anthranilate synthase (AS) provides the glutamine amidotransferase activity which generates ammonia as a substrate that, along with chorismate, is used in the second step, catalyzed by the large alpha subunit of AS (TrpE) to produce anthranilate. In the absence of TrpG, TrpE can synthesize anthranilate directly from chorismate and high concentrations of ammonia. This Vibrio cholerae serotype O1 (strain ATCC 39315 / El Tor Inaba N16961) protein is Anthranilate synthase component 2 (trpG).